The following is a 340-amino-acid chain: Glycerol-3-phosphate dehydrogenase [NAD(P)+] (340 aa).

Residues W11, R33, and K110 each coordinate NADPH. Residues K110, G144, and S146 each contribute to the sn-glycerol 3-phosphate site. Residue A148 coordinates NADPH. Positions 199, 252, 262, 263, and 264 each coordinate sn-glycerol 3-phosphate. The active-site Proton acceptor is K199. R263 lines the NADPH pocket. 2 residues coordinate NADPH: V287 and E289.

The protein belongs to the NAD-dependent glycerol-3-phosphate dehydrogenase family.

Its subcellular location is the cytoplasm. It carries out the reaction sn-glycerol 3-phosphate + NAD(+) = dihydroxyacetone phosphate + NADH + H(+). The enzyme catalyses sn-glycerol 3-phosphate + NADP(+) = dihydroxyacetone phosphate + NADPH + H(+). The protein operates within membrane lipid metabolism; glycerophospholipid metabolism. Catalyzes the reduction of the glycolytic intermediate dihydroxyacetone phosphate (DHAP) to sn-glycerol 3-phosphate (G3P), the key precursor for phospholipid synthesis. The chain is Glycerol-3-phosphate dehydrogenase [NAD(P)+] from Polynucleobacter asymbioticus (strain DSM 18221 / CIP 109841 / QLW-P1DMWA-1) (Polynucleobacter necessarius subsp. asymbioticus).